Here is a 235-residue protein sequence, read N- to C-terminus: UPF0502 protein Bcep18194_B0081 (235 aa).

This sequence belongs to the UPF0502 family.

The chain is UPF0502 protein Bcep18194_B0081 from Burkholderia lata (strain ATCC 17760 / DSM 23089 / LMG 22485 / NCIMB 9086 / R18194 / 383).